The following is a 363-amino-acid chain: Protein-glutamate methylesterase/protein-glutamine glutaminase 3 (363 aa).

One can recognise a Response regulatory domain in the interval 8 to 125; that stretch reads KVLCVDDSAL…RDGMLDYAEK (118 aa). Residue aspartate 59 is modified to 4-aspartylphosphate. The 193-residue stretch at 164–356 folds into the CheB-type methylesterase domain; that stretch reads LVSTEKLIII…RRVMARLATM (193 aa). Active-site residues include serine 176, histidine 202, and aspartate 298.

The protein belongs to the CheB family. Post-translationally, phosphorylated by CheA. Phosphorylation of the N-terminal regulatory domain activates the methylesterase activity.

The protein localises to the cytoplasm. It carries out the reaction [protein]-L-glutamate 5-O-methyl ester + H2O = L-glutamyl-[protein] + methanol + H(+). It catalyses the reaction L-glutaminyl-[protein] + H2O = L-glutamyl-[protein] + NH4(+). Functionally, involved in chemotaxis. Part of a chemotaxis signal transduction system that modulates chemotaxis in response to various stimuli. Catalyzes the demethylation of specific methylglutamate residues introduced into the chemoreceptors (methyl-accepting chemotaxis proteins or MCP) by CheR. Also mediates the irreversible deamidation of specific glutamine residues to glutamic acid. The polypeptide is Protein-glutamate methylesterase/protein-glutamine glutaminase 3 (Burkholderia lata (strain ATCC 17760 / DSM 23089 / LMG 22485 / NCIMB 9086 / R18194 / 383)).